Consider the following 186-residue polypeptide: ADP-ribosylation factor-like protein 8A (186 aa).

The note=Mediates targeting to membranes intramembrane region spans 1 to 19; that stretch reads MIALFNKLLDWFKALFWKE. Residues 29–35, 71–75, and 130–133 contribute to the GTP site; these read QYSGKTT, DIGGQ, and NKRD.

This sequence belongs to the small GTPase superfamily. Arf family. Interacts with PLEKHM1. When GTP-bound, interacts with RUFY3 and RUFY4, but not with RUFY1, nor RUFY2. Ubiquitously expressed.

The protein localises to the late endosome membrane. Its subcellular location is the lysosome membrane. The protein resides in the cytoplasm. It localises to the cytoskeleton. It is found in the spindle. The protein localises to the cell projection. Its subcellular location is the axon. The protein resides in the synapse. Functionally, plays a role in lysosome motility. In neurons, mediates the anterograde axonal long-range transport of presynaptic lysosome-related vesicles required for presynaptic biogenesis and synaptic function. May play a role in chromosome segregation. This is ADP-ribosylation factor-like protein 8A (ARL8A) from Homo sapiens (Human).